Reading from the N-terminus, the 477-residue chain is Tyrosine--tRNA ligase, mitochondrial (477 aa).

A mitochondrion-targeting transit peptide spans 1–16; that stretch reads MAAPILRSFSWGRWSG. Y77 contacts L-tyrosine. D81 serves as a coordination point for ATP. A 'HIGH' region motif is present at residues 82–91; the sequence is PTADSLHVGH. L-tyrosine contacts are provided by D121, Y221, Q225, and D228. ATP is bound at residue 244–246; that stretch reads GSD. Q247 lines the L-tyrosine pocket. ATP-binding residues include I274 and K284. Positions 281-285 match the 'KMSKS' region motif; sequence KLGKS. K355 and K367 each carry N6-acetyllysine.

It belongs to the class-I aminoacyl-tRNA synthetase family. In terms of assembly, homodimer.

The protein localises to the mitochondrion matrix. It carries out the reaction tRNA(Tyr) + L-tyrosine + ATP = L-tyrosyl-tRNA(Tyr) + AMP + diphosphate + H(+). Functionally, catalyzes the attachment of tyrosine to tRNA(Tyr) in a two-step reaction: tyrosine is first activated by ATP to form Tyr-AMP and then transferred to the acceptor end of tRNA(Tyr). The sequence is that of Tyrosine--tRNA ligase, mitochondrial (YARS2) from Homo sapiens (Human).